A 412-amino-acid polypeptide reads, in one-letter code: Serine hydroxymethyltransferase (412 aa).

(6S)-5,6,7,8-tetrahydrofolate contacts are provided by residues leucine 117 and 121–123 (GHL). Position 226 is an N6-(pyridoxal phosphate)lysine (lysine 226). Residues glutamate 242 and 350 to 352 (SPF) contribute to the (6S)-5,6,7,8-tetrahydrofolate site.

This sequence belongs to the SHMT family. As to quaternary structure, homodimer. Pyridoxal 5'-phosphate serves as cofactor.

It is found in the cytoplasm. It catalyses the reaction (6R)-5,10-methylene-5,6,7,8-tetrahydrofolate + glycine + H2O = (6S)-5,6,7,8-tetrahydrofolate + L-serine. The protein operates within one-carbon metabolism; tetrahydrofolate interconversion. It functions in the pathway amino-acid biosynthesis; glycine biosynthesis; glycine from L-serine: step 1/1. In terms of biological role, catalyzes the reversible interconversion of serine and glycine with tetrahydrofolate (THF) serving as the one-carbon carrier. Also exhibits THF-independent aldolase activity toward beta-hydroxyamino acids, producing glycine and aldehydes, via a retro-aldol mechanism. The protein is Serine hydroxymethyltransferase of Methanosarcina acetivorans (strain ATCC 35395 / DSM 2834 / JCM 12185 / C2A).